The following is a 412-amino-acid chain: Tryptophan synthase beta chain (412 aa).

Lys105 is modified (N6-(pyridoxal phosphate)lysine).

This sequence belongs to the TrpB family. Tetramer of two alpha and two beta chains. It depends on pyridoxal 5'-phosphate as a cofactor.

The catalysed reaction is (1S,2R)-1-C-(indol-3-yl)glycerol 3-phosphate + L-serine = D-glyceraldehyde 3-phosphate + L-tryptophan + H2O. Its pathway is amino-acid biosynthesis; L-tryptophan biosynthesis; L-tryptophan from chorismate: step 5/5. In terms of biological role, the beta subunit is responsible for the synthesis of L-tryptophan from indole and L-serine. The sequence is that of Tryptophan synthase beta chain (trpB) from Synechocystis sp. (strain ATCC 27184 / PCC 6803 / Kazusa).